We begin with the raw amino-acid sequence, 540 residues long: Cytochrome P450 27C1 (540 aa).

Residue C486 coordinates heme.

This sequence belongs to the cytochrome P450 family. Heme serves as cofactor. Following L-thyroxine, expressed in the retinal pigment epithelium (at protein level).

The protein localises to the membrane. The catalysed reaction is all-trans-retinol + 2 reduced [adrenodoxin] + O2 + 2 H(+) = all-trans-3,4-didehydroretinol + 2 oxidized [adrenodoxin] + 2 H2O. Functionally, efficiently catalyzes the conversion of all-trans retinol (also called vitamin A1, the precursor of 11-cis retinal) to 3,4-didehydroretinol (also called vitamin A2, the precursor of 11-cis 3,4-didehydroretinal). Also acts on all-trans retinal and all-trans retinoic acid. The replacement of 11-cis retinal chromophore in photopigments with 11-cis 3,4-didehydroretinal enhances sensitivity to long-wavelength light. This may improve vision in fresh water which is often turbid. The polypeptide is Cytochrome P450 27C1 (cyp27c1) (Danio rerio (Zebrafish)).